The primary structure comprises 118 residues: Hisactophilin-1 (118 aa).

Gly-2 is lipidated: N-myristoyl glycine. Positions 8–109 are contains several HHXH repeats; it reads SHHGHFLSAE…HVSTKEHHDH (102 aa). A run of 2 repeats spans residues 34-46 and 74-86. The segment at 34 to 86 is 2 X 13 AA approximate repeats; it reads FHVENHGGKVALKTHCGKYLSIGDHKQVYLSHHLHGDHSLFHLEHHGGKVSIK.

Belongs to the hisactophilin family. Homodimer or heterodimer of hatA and hatB, linked by a disulfide bond. Post-translationally, phosphorylated.

Its subcellular location is the cytoplasm. It localises to the cell membrane. In terms of biological role, may act as an intracellular pH sensor that links chemotactic signals to responses in the microfilament system of the cells by nucleating actin polymerization or stabilizing the filaments. In Dictyostelium discoideum (Social amoeba), this protein is Hisactophilin-1 (hatA).